The following is a 237-amino-acid chain: Ribosomal RNA large subunit methyltransferase E (237 aa).

Gly-76, Trp-78, Asp-99, Asp-115, and Asp-139 together coordinate S-adenosyl-L-methionine. The active-site Proton acceptor is Lys-179.

The protein belongs to the class I-like SAM-binding methyltransferase superfamily. RNA methyltransferase RlmE family.

The protein resides in the cytoplasm. The catalysed reaction is uridine(2552) in 23S rRNA + S-adenosyl-L-methionine = 2'-O-methyluridine(2552) in 23S rRNA + S-adenosyl-L-homocysteine + H(+). Functionally, specifically methylates the uridine in position 2552 of 23S rRNA at the 2'-O position of the ribose in the fully assembled 50S ribosomal subunit. The chain is Ribosomal RNA large subunit methyltransferase E from Rhodopseudomonas palustris (strain ATCC BAA-98 / CGA009).